Consider the following 257-residue polypeptide: Imidazole glycerol phosphate synthase subunit HisF (257 aa).

Active-site residues include Asp12 and Asp131.

The protein belongs to the HisA/HisF family. In terms of assembly, heterodimer of HisH and HisF.

It is found in the cytoplasm. It catalyses the reaction 5-[(5-phospho-1-deoxy-D-ribulos-1-ylimino)methylamino]-1-(5-phospho-beta-D-ribosyl)imidazole-4-carboxamide + L-glutamine = D-erythro-1-(imidazol-4-yl)glycerol 3-phosphate + 5-amino-1-(5-phospho-beta-D-ribosyl)imidazole-4-carboxamide + L-glutamate + H(+). The protein operates within amino-acid biosynthesis; L-histidine biosynthesis; L-histidine from 5-phospho-alpha-D-ribose 1-diphosphate: step 5/9. IGPS catalyzes the conversion of PRFAR and glutamine to IGP, AICAR and glutamate. The HisF subunit catalyzes the cyclization activity that produces IGP and AICAR from PRFAR using the ammonia provided by the HisH subunit. In Burkholderia mallei (strain NCTC 10247), this protein is Imidazole glycerol phosphate synthase subunit HisF.